We begin with the raw amino-acid sequence, 309 residues long: Homoserine kinase (309 aa).

91–101 contacts ATP; sequence PIGSGLGSSAC.

The protein belongs to the GHMP kinase family. Homoserine kinase subfamily.

The protein resides in the cytoplasm. The catalysed reaction is L-homoserine + ATP = O-phospho-L-homoserine + ADP + H(+). It functions in the pathway amino-acid biosynthesis; L-threonine biosynthesis; L-threonine from L-aspartate: step 4/5. In terms of biological role, catalyzes the ATP-dependent phosphorylation of L-homoserine to L-homoserine phosphate. This Erwinia tasmaniensis (strain DSM 17950 / CFBP 7177 / CIP 109463 / NCPPB 4357 / Et1/99) protein is Homoserine kinase.